A 245-amino-acid chain; its full sequence is Probable transcriptional regulatory protein Aflv_0709 (245 aa).

The span at 1–14 shows a compositional bias: basic residues; it reads MAGHSKWKNIQRRK. The segment at 1–21 is disordered; it reads MAGHSKWKNIQRRKNAQDAKR.

Belongs to the TACO1 family.

Its subcellular location is the cytoplasm. The sequence is that of Probable transcriptional regulatory protein Aflv_0709 from Anoxybacillus flavithermus (strain DSM 21510 / WK1).